Reading from the N-terminus, the 145-residue chain is Transcriptional regulator SlyA (145 aa).

Residues 2–135 form the HTH marR-type domain; it reads ELPLGSDLAR…LALLVARLEK (134 aa). The H-T-H motif DNA-binding region spans 49 to 72; the sequence is QIQLAKAIGIEQPSLVRTLDQLEE.

The protein belongs to the SlyA family. In terms of assembly, homodimer.

Its function is as follows. Transcription regulator that can specifically activate or repress expression of target genes. The protein is Transcriptional regulator SlyA of Pectobacterium atrosepticum (strain SCRI 1043 / ATCC BAA-672) (Erwinia carotovora subsp. atroseptica).